The chain runs to 288 residues: Glucose-1-phosphate thymidylyltransferase (288 aa).

Positions 108 and 223 each coordinate Mg(2+).

It belongs to the glucose-1-phosphate thymidylyltransferase family. In terms of assembly, homotetramer. It depends on Mg(2+) as a cofactor.

The enzyme catalyses dTTP + alpha-D-glucose 1-phosphate + H(+) = dTDP-alpha-D-glucose + diphosphate. In terms of biological role, catalyzes the formation of dTDP-glucose, from dTTP and glucose 1-phosphate, as well as its pyrophosphorolysis. The protein is Glucose-1-phosphate thymidylyltransferase (rmlA) of Neisseria gonorrhoeae.